Consider the following 309-residue polypeptide: Transcriptional regulator HilD (309 aa).

Residues Glu209–Met306 enclose the HTH araC/xylS-type domain. DNA-binding regions (H-T-H motif) lie at residues Thr226–Gly247 and Val273–Phe296.

This Salmonella typhimurium (strain SL1344) protein is Transcriptional regulator HilD (hilD).